The sequence spans 422 residues: Serine--tRNA ligase (422 aa).

229–231 (TAE) is a binding site for L-serine. 260-262 (RKE) serves as a coordination point for ATP. Glu283 lines the L-serine pocket. 347-350 (EISS) serves as a coordination point for ATP. An L-serine-binding site is contributed by Ser383.

Belongs to the class-II aminoacyl-tRNA synthetase family. Type-1 seryl-tRNA synthetase subfamily. As to quaternary structure, homodimer. The tRNA molecule binds across the dimer.

The protein localises to the cytoplasm. It catalyses the reaction tRNA(Ser) + L-serine + ATP = L-seryl-tRNA(Ser) + AMP + diphosphate + H(+). The enzyme catalyses tRNA(Sec) + L-serine + ATP = L-seryl-tRNA(Sec) + AMP + diphosphate + H(+). It functions in the pathway aminoacyl-tRNA biosynthesis; selenocysteinyl-tRNA(Sec) biosynthesis; L-seryl-tRNA(Sec) from L-serine and tRNA(Sec): step 1/1. In terms of biological role, catalyzes the attachment of serine to tRNA(Ser). Is also able to aminoacylate tRNA(Sec) with serine, to form the misacylated tRNA L-seryl-tRNA(Sec), which will be further converted into selenocysteinyl-tRNA(Sec). The chain is Serine--tRNA ligase from Geobacter sulfurreducens (strain ATCC 51573 / DSM 12127 / PCA).